The primary structure comprises 139 residues: Hydrogenase maturation factor HypA (139 aa).

His-2 lines the Ni(2+) pocket. Zn(2+) contacts are provided by Cys-73, Cys-76, Cys-110, and Cys-113.

This sequence belongs to the HypA/HybF family.

Functionally, involved in the maturation of [NiFe] hydrogenases. Required for nickel insertion into the metal center of the hydrogenase. In Pyrococcus furiosus (strain ATCC 43587 / DSM 3638 / JCM 8422 / Vc1), this protein is Hydrogenase maturation factor HypA.